The following is a 587-amino-acid chain: Adenine deaminase (587 aa).

The protein belongs to the metallo-dependent hydrolases superfamily. Adenine deaminase family. Mn(2+) serves as cofactor.

The catalysed reaction is adenine + H2O + H(+) = hypoxanthine + NH4(+). This Shewanella halifaxensis (strain HAW-EB4) protein is Adenine deaminase.